The primary structure comprises 450 residues: MLKNNEILETISMIKEQNLDVRTITLGLSLMDCACEDVKVLSEKIYDKITKTAENLVKTGEDIEKRFGIPIINKRISVTPISIVAASCNCNSYLDIAKAMDKAAKEVGVDFIGGFSALVHKGFTNSDLKLIKSLPESLANTDIVCSSVNIGSTRYGINMDAVKLMGETIKETSLITPDGFGCAKLVVFCNAVEDNPFMAGAFHGVGEAEKVINVGVSGPGVVKKALEEVRGKSFEEVAETIKKTSFKVTRMGQLVAKEASKLMDIPFGIVDLSLAPTPAVGDSVGRVLEEMGLSNCGTHGTTAALALLNDAVKKGGLMASSYVGGLSGAFIPVSEDECMIEQSKNGFLTIEKLEAMTCVCSVGLDMIAIPGKTSASTISGIIADEAAIGMINNKTTAVRIIPVPNKDIGDIVEFGGLLGSAPIMRVSPGNCDDFISRGGRIPAPVHSLKN.

The protein belongs to the UPF0210 family. As to quaternary structure, homodimer.

The sequence is that of UPF0210 protein CPF_1748 from Clostridium perfringens (strain ATCC 13124 / DSM 756 / JCM 1290 / NCIMB 6125 / NCTC 8237 / Type A).